A 336-amino-acid polypeptide reads, in one-letter code: F420-dependent glucose-6-phosphate dehydrogenase (336 aa).

Asp39 contacts coenzyme F420-(gamma-Glu)n. His40 acts as the Proton donor in catalysis. Coenzyme F420-(gamma-Glu)n contacts are provided by residues Thr76 and Thr107 to Gly108. Glu109 acts as the Proton acceptor in catalysis. Residues Asn112, Gly177–Gly178, and Leu180–Val181 contribute to the coenzyme F420-(gamma-Glu)n site. 4 residues coordinate substrate: Thr195, Lys198, Lys259, and Arg283.

This sequence belongs to the F420-dependent glucose-6-phosphate dehydrogenase family. Homodimer.

It carries out the reaction oxidized coenzyme F420-(gamma-L-Glu)(n) + D-glucose 6-phosphate + H(+) = 6-phospho-D-glucono-1,5-lactone + reduced coenzyme F420-(gamma-L-Glu)(n). In terms of biological role, catalyzes the coenzyme F420-dependent oxidation of glucose 6-phosphate (G6P) to 6-phosphogluconolactone. This chain is F420-dependent glucose-6-phosphate dehydrogenase, found in Nocardia farcinica (strain IFM 10152).